We begin with the raw amino-acid sequence, 52 residues long: Conotoxin Cal9.2c (52 aa).

The propeptide occupies 1 to 6 (KKGVTL). Cystine bridges form between cysteine 14–cysteine 31, cysteine 19–cysteine 41, and cysteine 21–cysteine 46.

In terms of tissue distribution, expressed by the venom duct.

The protein localises to the secreted. Its function is as follows. Probable neurotoxin with unknown target. Possibly targets ion channels. The polypeptide is Conotoxin Cal9.2c (Californiconus californicus (California cone)).